The sequence spans 2437 residues: Polyprotein P1234 (2437 aa).

Positions 28–259 (EAQQVTPNDH…ESRRLLKSWH (232 aa)) constitute an Alphavirus-like MT domain. Residues 244–263 (GSTLYIESRRLLKSWHLPSV) are nsP1 membrane-binding. 2 S-palmitoyl cysteine; by host lipidation sites follow: C417 and C419. Positions 691-843 (DLINPPFHEF…HNICTEVDHK (153 aa)) constitute a (+)RNA virus helicase ATP-binding domain. An a ribonucleoside 5'-triphosphate-binding site is contributed by 722-729 (GVPGSGKS). The (+)RNA virus helicase C-terminal domain maps to 844–992 (SISRRCTLPI…LEDWQREHDT (149 aa)). The region spanning 1005-1327 (DVFQNKAKVC…GKLSSIYAGT (323 aa)) is the Peptidase C9 domain. The interval 1006-1025 (VFQNKAKVCWAKCLVPVLET) is nucleolus localization signal. The active-site For cysteine protease nsP2 activity is C1014. Residues 1059–1068 (TKIYGVDLDS) carry the Nuclear export signal motif. H1084 functions as the For cysteine protease nsP2 activity in the catalytic mechanism. A Nuclear localization signal motif is present at residues 1182–1186 (PRRKV). One can recognise a Macro domain in the interval 1335–1493 (APAYAVKRAD…QKIKTVLQNR (159 aa)). Residues D1344, N1358, G1366, G1446, I1447, and F1448 each contribute to the ADP-D-ribose site. 4 residues coordinate Zn(2+): C1596, C1598, C1621, and C1639. Residues 1675 to 1684 (TSDSSSLSTF) show a composition bias toward low complexity. The disordered stretch occupies residues 1675 to 1729 (TSDSSSLSTFPDLESAEELDHDSQSVRPALNEPDDHQPTPTAELATHPVPPPRPN). 2 short sequence motifs (FGDF; binding to host G3BP1) span residues 1792 to 1795 (FGAP) and 1804 to 1807 (FGDF). In terms of domain architecture, RdRp catalytic spans 2191–2306 (DHVLETDIAS…HGVVSDKLMA (116 aa)).

Interacts with non-structural protein 3. Interacts with RNA-directed RNA polymerase nsP4. Interacts with protease nsP2. interacts with itself. As to quaternary structure, interacts with mRNA-capping enzyme nsP1. Interacts with host DDX1. Interacts with host DDX3. Interacts (via C-terminus) with host G3BP1; this interaction inhibits the formation of host stress granules on viral mRNAs and the nsp3-G3BP1 complexes bind viral RNAs and probably orchestrate the assembly of viral replication complexes. Interacts (via C-terminus) with host G3BP2; this interaction inhibits the formation of host stress granules on viral mRNAs and the nsp3-G3BP2 complexes bind viral RNAs and probably orchestrate the assembly of viral replication complexes. In terms of assembly, interacts with mRNA-capping enzyme nsP1. Interacts with protease nsP2. interacts with itself. Interacts with RNA-directed RNA polymerase nsP4. Interacts with mRNA-capping enzyme nsP1. Interacts with KPNA1/karyopherin-alpha1; this interaction probably allows the active transport of protease nsP2 into the host nucleus. Interacts with host POLR2A/RPB1; this interaction seems to induce the depletion of host POLR2A and may play a role in the transcriptional shutoff induced by protease nsP2. Interacts with host GTF2E2/TF2E2; this interaction seems to induce the depletion of host GTF2E2/TF2E2 and may play a role in the transcriptional shutoff induced by protease nsP2. It depends on Mg(2+) as a cofactor. Requires Mn(2+) as cofactor. Specific enzymatic cleavages in vivo yield mature proteins. The processing of the polyprotein is temporally regulated. In early stages (1.7 hpi), P1234 is first cleaved in trans through its nsP2 protease activity, releasing P123' and nsP4, which associate to form the early replication complex. At the same time, P1234 is also cut at the nsP1/nsP2 site early in infection but with lower efficiency. After replication of the viral minus-strand RNAs (4 hpi), the polyproteins are cut at the nsP1/nsP2 and nsP2/nsP3 sites very efficiently, preventing accumulation of P123' and P1234 and allowing the formation of the late replication complex. NsP3'/nsP4 site is not cleaved anymore and P34 is produced rather than nsP4. Post-translationally, specific enzymatic cleavages in vivo yield mature proteins. The processing of the polyprotein is temporally regulated. In early stages (1.7 hpi), P123 is cleaved at the nsP1/nsP2 site with low efficiency. After replication of the viral minus-strand RNAs (4 hpi), the polyproteins are cut at the nsP1/nsP2 and nsP2/nsP3 sites very efficiently, preventing accumulation of P123 and allowing the formation of the late replication complex. In terms of processing, specific enzymatic cleavages in vivo yield mature proteins. The processing of the polyprotein is temporally regulated. In early stages (1.7 hpi), P123' is cleaved at the nsP1/nsP2 site with low efficiency. After replication of the viral minus-strand RNAs (4 hpi), the polyproteins are cut at the nsP1/nsP2 and nsP2/nsP3 sites very efficiently, preventing accumulation of P123' and allowing the formation of the late replication complex. Palmitoylated by host palmitoyltransferases ZDHHC2 and ZDHHC19. Post-translationally, phosphorylated by host on serines and threonines. In terms of processing, ubiquitinated; targets the protein for rapid degradation via the ubiquitin system. Nsp4 is present in extremely low quantities due to low frequency of translation through the amber stop-codon and the degradation by the ubiquitin pathway.

The protein resides in the host cytoplasmic vesicle membrane. It is found in the host cell membrane. It localises to the host cell projection. Its subcellular location is the host filopodium. The protein localises to the host nucleus. The protein resides in the host cytoplasm. The catalysed reaction is GTP + S-adenosyl-L-methionine = N(7)-methyl-GTP + S-adenosyl-L-homocysteine. It carries out the reaction N(7)-methyl-GTP + L-histidyl-[protein] = N(tele)-(N(7)-methylguanosine 5'-phospho)-L-histidyl-[protein] + diphosphate. It catalyses the reaction N(tele)-(N(7)-methylguanosine 5'-phospho)-L-histidyl-[protein] + a 5'-end diphospho-(purine-ribonucleoside) in mRNA + H(+) = a 5'-end (N(7)-methyl 5'-triphosphoguanosine)-(purine-ribonucleoside) in mRNA + L-histidyl-[protein]. The enzyme catalyses a 5'-end triphospho-ribonucleoside in mRNA + H2O = a 5'-end diphospho-ribonucleoside in mRNA + phosphate + H(+). The catalysed reaction is a ribonucleoside 5'-triphosphate + H2O = a ribonucleoside 5'-diphosphate + phosphate + H(+). It carries out the reaction ATP + H2O = ADP + phosphate + H(+). It catalyses the reaction RNA(n) + a ribonucleoside 5'-triphosphate = RNA(n+1) + diphosphate. The enzyme catalyses RNA(n) + ATP = RNA(n)-3'-adenine ribonucleotide + diphosphate. The catalysed reaction is 4-O-(ADP-D-ribosyl)-L-aspartyl-[protein] + H2O = L-aspartyl-[protein] + ADP-D-ribose + H(+). It carries out the reaction 5-O-(ADP-D-ribosyl)-L-glutamyl-[protein] + H2O = L-glutamyl-[protein] + ADP-D-ribose + H(+). It catalyses the reaction ADP-alpha-D-ribose 1''-phosphate + H2O = ADP-D-ribose + phosphate. Functionally, inactive precursor of the viral replicase, which is activated by cleavages carried out by the viral protease nsP2. In terms of biological role, the early replication complex formed by the polyprotein P123 and nsP4 synthesizes minus-strand RNAs. As soon P123 is cleaved into mature proteins, the plus-strand RNAs synthesis begins. The early replication complex formed by the polyprotein P123' and nsP4 synthesizes minus-strand RNAs. Polyprotein P123' is a short-lived polyprotein that accumulates during early stage of infection. As soon P123' is cleaved into mature proteins, the plus-strand RNAs synthesis begins. Its function is as follows. Cytoplasmic capping enzyme that catalyzes two virus-specific reactions: methyltransferase and nsP1 guanylyltransferase. mRNA-capping is necessary since all viral RNAs are synthesized in the cytoplasm, and host capping enzymes are restricted to the nucleus. The enzymatic reaction involves a covalent link between 7-methyl-GMP and nsP1, whereas eukaryotic capping enzymes form a covalent complex only with GMP. nsP1 capping consists in the following reactions: GTP is first methylated into 7-methyl-GMP and then is covalently linked to nsP1 to form the m7GMp-nsP1 complex from which 7-methyl-GMP complex is transferred to the mRNA to create the cap structure. NsP1 is needed for the initiation of the minus-strand RNAs synthesis. Probably serves as a membrane anchor for the replication complex composed of nsP1-nsP4. Palmitoylated nsP1 is remodeling host cell cytoskeleton, and induces filopodium-like structure formation at the surface of the host cell. Functionally, multifunctional protein whose N-terminus is part of the RNA polymerase complex and displays NTPase, RNA triphosphatase and helicase activities. NTPase and RNA triphosphatase are involved in viral RNA capping and helicase keeps a check on the dsRNA replication intermediates. The C-terminus harbors a protease that specifically cleaves the polyproteins and releases the mature proteins. Required for the shutoff of minus-strand RNAs synthesis. Specifically inhibits the host IFN response by promoting the nuclear export of host STAT1. Induces host transcription shutoff by inducing rapid proteasome-dependent degradation of POLR2A, a catalytic subunit of the RNAPII complex. The resulting inhibition of cellular protein synthesis serves to ensure maximal viral gene expression and to evade host immune response. In terms of biological role, seems to be essential for minus-strand RNAs and subgenomic 26S mRNAs synthesis. Displays mono-ADP-ribosylhydrolase activity. ADP-ribosylation is a post-translational modification that controls various processes of the host cell and the virus probably needs to revert it for optimal viral replication. Binds proteins of FXR family and sequesters them into the viral RNA replication complexes thereby inhibiting the formation of host stress granules on viral mRNAs. The nsp3'-FXR complexes bind viral RNAs and probably orchestrate the assembly of viral replication complexes, thanks to the ability of FXR family members to self-assemble and bind DNA. Seems to be essential for minus-strand RNAs and subgenomic 26S mRNAs synthesis. Displays mono-ADP-ribosylhydrolase activity. ADP-ribosylation is a post-translantional modification that controls various processes of the host cell and the virus probably needs to revert it for optimal viral replication. Binds proteins of G3BP family and sequesters them into the viral RNA replication complexes thereby inhibiting the formation of host stress granules on viral mRNAs. The nsp3-G3BP complexes bind viral RNAs and probably orchestrate the assembly of viral replication complexes, thanks to the ability of G3BP family members to self-assemble and bind DNA. Its function is as follows. RNA dependent RNA polymerase. Replicates genomic and antigenomic RNA by recognizing replications specific signals. The early replication complex formed by the polyprotein P123 and nsP4 synthesizes minus-strand RNAs. The late replication complex composed of fully processed nsP1-nsP4 is responsible for the production of genomic and subgenomic plus-strand RNAs. The core catalytic domain of nsP4 also possesses terminal adenylyltransferase (TATase) activity that is probably involved in maintenance and repair of the poly(A) tail, an element required for replication of the viral genome. The sequence is that of Polyprotein P1234 from Aedes aegypti (Yellowfever mosquito).